A 197-amino-acid polypeptide reads, in one-letter code: RING-H2 finger protein ATL80 (197 aa).

Residues 30 to 50 form a helical membrane-spanning segment; sequence LVVILAALLCALICVLGLIAV. An RING-type; atypical zinc finger spans residues 111-153; it reads CAICLAEFSAGDELRVLPQCGHGFHVACIDTWLGSHSSCPSCR. A disordered region spans residues 168 to 197; sequence PGSSSSGLESEPEIEIRIKQGEDDPNSFLP.

Belongs to the RING-type zinc finger family. ATL subfamily.

The protein localises to the membrane. It carries out the reaction S-ubiquitinyl-[E2 ubiquitin-conjugating enzyme]-L-cysteine + [acceptor protein]-L-lysine = [E2 ubiquitin-conjugating enzyme]-L-cysteine + N(6)-ubiquitinyl-[acceptor protein]-L-lysine.. Its pathway is protein modification; protein ubiquitination. In terms of biological role, may be involved in the early steps of the plant defense signaling pathway. The sequence is that of RING-H2 finger protein ATL80 (ATL80) from Arabidopsis thaliana (Mouse-ear cress).